The sequence spans 292 residues: Tissue factor (292 aa).

The first 35 residues, 1–35 (MATPNGPRVPCPQAAVARALLFGLVLIQGAGVAGT), serve as a signal peptide directing secretion. Over 36–248 (TDVVVAYNIT…TSHEKVLSTE (213 aa)) the chain is Extracellular. The N-linked (GlcNAc...) asparagine glycan is linked to Asn43. A WKS motif motif is present at residues 46 to 48 (WKS). A disulfide bridge connects residues Cys81 and Cys89. Residues Asn153 and Asn181 are each glycosylated (N-linked (GlcNAc...) asparagine). The cysteines at positions 215 and 238 are disulfide-linked. The helical transmembrane segment at 249-271 (LFFIIGTVMLVIIIFIVVLSVSL) threads the bilayer. At 272–292 (HKCRKVRAERSGKENTPLNAA) the chain is on the cytoplasmic side. Cys274 carries S-palmitoyl cysteine lipidation.

Belongs to the tissue factor family. As to quaternary structure, interacts with HSPE; the interaction, inhibited by heparin, promotes the generation of activated factor X and activates coagulation in the presence of activated factor VII.

The protein localises to the membrane. Its function is as follows. Initiates blood coagulation by forming a complex with circulating factor VII or VIIa. The [TF:VIIa] complex activates factors IX or X by specific limited proteolysis. TF plays a role in normal hemostasis by initiating the cell-surface assembly and propagation of the coagulation protease cascade. The protein is Tissue factor (F3) of Bos taurus (Bovine).